The chain runs to 212 residues: uncharacterized protein (212 aa).

Positions 53, 74, and 97 each coordinate S-adenosyl-L-methionine.

It belongs to the methyltransferase superfamily. YrrT family.

Its function is as follows. Could be a S-adenosyl-L-methionine-dependent methyltransferase. This is an uncharacterized protein from Bacillus cereus (strain ZK / E33L).